The chain runs to 247 residues: MASSDERPGAYPARDGSENLPPGDPKTMKTVVMDKGAAMMQSLKPIKQMSLHLCSFACYGHDPSRQIEVNFYVHRLNQDFLQCAVYDCDSSKPHLIGIEYIVSERLFESLDPEEQKLWHSHDYEIQTGLLVTPRVPELVAKTELENIAKTYGKFWCTWQTDRGDKLPLGAPSLMMSPQDVNMGKIKPGLLKKRDDEYGISTESLKTSRVGIMGPEKKNSMADYWVHHGKGLAVDIIETEMQKLAPFP.

Positions 1–26 are disordered; it reads MASSDERPGAYPARDGSENLPPGDPK.

Belongs to the OBAP family.

The sequence is that of Oil body-associated protein 2A from Arabidopsis thaliana (Mouse-ear cress).